A 449-amino-acid chain; its full sequence is Ktr system potassium uptake protein D (449 aa).

10 consecutive transmembrane segments (helical) span residues 17–37 (LIAL…SLPA), 46–66 (TFID…LTVV), 75–95 (IGIF…MTLG), 133–153 (VLFL…TYFL), 194–214 (FVQF…PVLV), 235–255 (ITTI…FALE), 297–317 (LFFI…GGGI), 355–375 (LVVT…LTIT), 380–400 (LLEL…SLGI), and 411–431 (VIMI…YLIG).

It belongs to the TrkH potassium transport family. Ktr (TC 2.A.38.4) subfamily. In terms of assembly, homodimer. Part of the KtrCD complex formed by an octameric catalytic ring of KtrC and a membrane associated dimer of KtrD forming a potassium channel.

It is found in the cell membrane. In terms of biological role, integral membrane subunit of the KtrCD potassium uptake transporter. The 2 major potassium transporter complexes KtrAB and KtrCD confer resistance to both suddenly imposed and prolonged osmotic stress. The protein is Ktr system potassium uptake protein D (ktrD) of Bacillus subtilis (strain 168).